The primary structure comprises 88 residues: Protein transport protein SBH2 (88 aa).

Residues 1 to 42 form a disordered region; that stretch reads MAASVPPGGQRILQKRRQAQSIKEKQAKQTPTSTRQAGYGGS. At 1–61 the chain is on the cytoplasmic side; it reads MAASVPPGGQ…DEANGFRVDS (61 aa). A compositionally biased stretch (polar residues) spans 28–42; it reads KQTPTSTRQAGYGGS. The helical transmembrane segment at 62-82 threads the bilayer; it reads LVVLFLSVGFIFSVIALHLLT.

It belongs to the SEC61-beta family. Component of the heterotrimeric Ssh1 complex, which is composed of SSH1, SBH2 and SSS1.

The protein localises to the endoplasmic reticulum membrane. Functionally, part of the Ssh1 complex, which probably is the major component of a channel-forming translocon complex that may function exclusively in the cotranslational pathway of protein endoplasmic reticulum (ER) import. The polypeptide is Protein transport protein SBH2 (SBH2) (Saccharomyces cerevisiae (strain ATCC 204508 / S288c) (Baker's yeast)).